Reading from the N-terminus, the 518-residue chain is Crotonobetaine/carnitine--CoA ligase (518 aa).

The protein belongs to the ATP-dependent AMP-binding enzyme family.

It carries out the reaction 4-(trimethylamino)butanoate + ATP + CoA = 4-(trimethylamino)butanoyl-CoA + AMP + diphosphate. The catalysed reaction is crotonobetaine + ATP + CoA = crotonobetainyl-CoA + AMP + diphosphate. The enzyme catalyses (R)-carnitine + ATP + CoA = (R)-carnitinyl-CoA + AMP + diphosphate. Its pathway is amine and polyamine metabolism; carnitine metabolism. Its function is as follows. Catalyzes the transfer of CoA to carnitine, generating the initial carnitinyl-CoA needed for the CaiB reaction cycle. Also has activity toward crotonobetaine and gamma-butyrobetaine. The sequence is that of Crotonobetaine/carnitine--CoA ligase from Proteus sp. (strain LE138).